The primary structure comprises 399 residues: 3-phosphoshikimate 1-carboxyvinyltransferase (399 aa).

Lys19, Ser20, and Arg24 together coordinate 3-phosphoshikimate. Position 19 (Lys19) interacts with phosphoenolpyruvate. Phosphoenolpyruvate contacts are provided by Gly83 and Arg111. Ser152, Ser153, Gln154, Asp288, Gln310, and Lys314 together coordinate 3-phosphoshikimate. Gln154 lines the phosphoenolpyruvate pocket. The active-site Proton acceptor is Asp288. The phosphoenolpyruvate site is built by Arg318, Arg359, and Lys385.

This sequence belongs to the EPSP synthase family. Monomer.

The protein localises to the cytoplasm. It carries out the reaction 3-phosphoshikimate + phosphoenolpyruvate = 5-O-(1-carboxyvinyl)-3-phosphoshikimate + phosphate. It functions in the pathway metabolic intermediate biosynthesis; chorismate biosynthesis. Its function is as follows. Catalyzes the transfer of the enolpyruvyl moiety of phosphoenolpyruvate (PEP) to the 5-hydroxyl of shikimate-3-phosphate (S3P) to produce enolpyruvyl shikimate-3-phosphate and inorganic phosphate. The chain is 3-phosphoshikimate 1-carboxyvinyltransferase from Thermococcus kodakarensis (strain ATCC BAA-918 / JCM 12380 / KOD1) (Pyrococcus kodakaraensis (strain KOD1)).